The primary structure comprises 406 residues: MPPKKAPAGPSKKTEQKKKEKVIEDKTFGLKNKKGNKQQKFIQQVQKQVQAGGHHPRQDGDKKKDEKEKKLADLREMASIFKPVQTQKVDKGTDPKSVVCAFFKQGLCTKGDKCKFSHDLSLENKVEKRSMYVDMRDNEDDLMTNWDDAKLKEVVDKKHSEEKRRPTTEIICKFFLEAVEKSKYGWFWECPNGEKCIYRHALPPGYVLKRDKKKEDKPTEISLVDLIEKERAALGSNQTRVTLETFLAWKKRKLQEKKAKMVAEEERKKSDFSKGKQFGISGREMFSFNPDLVDDGPIEEGDAAFDVYKREDDDDDNAFEFKELDLAALSLAAKEVDGSGTIASSTRLLDQATEAAKTAAAEDGAASDDENPSSSAPANDAAPFNKDLFVDLAGELDDLDLDDEDD.

Over residues 1 to 11 (MPPKKAPAGPS) the composition is skewed to low complexity. The disordered stretch occupies residues 1–70 (MPPKKAPAGP…DKKKDEKEKK (70 aa)). The span at 12-28 (KKTEQKKKEKVIEDKTF) shows a compositional bias: basic and acidic residues. The segment covering 38 to 50 (QQKFIQQVQKQVQ) has biased composition (low complexity). Basic and acidic residues predominate over residues 56-70 (PRQDGDKKKDEKEKK). Positions 57–82 (RQDGDKKKDEKEKKLADLREMASIFK) form a coiled coil. 2 consecutive C3H1-type zinc fingers follow at residues 94–121 (DPKSVVCAFFKQGLCTKGDKCKFSHDLS) and 166–203 (PTTEIICKFFLEAVEKSKYGWFWECPNGEKCIYRHALP). Residues 336-382 (VDGSGTIASSTRLLDQATEAAKTAAAEDGAASDDENPSSSAPANDAA) form a disordered region. 2 stretches are compositionally biased toward low complexity: residues 352–364 (ATEAAKTAAAEDG) and 372–382 (PSSSAPANDAA).

It belongs to the ZC3H15/TMA46 family.

This chain is Zinc finger CCCH domain-containing protein 15 homolog, found in Drosophila pseudoobscura pseudoobscura (Fruit fly).